The chain runs to 756 residues: Cholesterol uptake protein 1 (756 aa).

The first 18 residues, 1 to 18 (MRTSQAIFILIFLDSVRN), serve as a signal peptide directing secretion. Topologically, residues 19-268 (QSPQVIPAKW…TIESSMKIFD (250 aa)) are extracellular. N-linked (GlcNAc...) asparagine glycosylation is found at asparagine 39 and asparagine 63. A Cholesterol-binding sequence motif motif is present at residues 124-129 (VHYNFR). N-linked (GlcNAc...) asparagine glycans are attached at residues asparagine 140, asparagine 174, and asparagine 257. The helical transmembrane segment at 269–289 (YTIPIVFWACILLLVTIVVFV) threads the bilayer. The Cytoplasmic segment spans residues 290-373 (YHYFDGIWER…YEERELKYDV (84 aa)). The chain crosses the membrane as a helical span at residues 374-394 (YKIALAIIGIFYNITVLQLII). Residues 395–421 (SKAGSLRQSGDLDECTFNFQCARPLWY) lie on the Extracellular side of the membrane. The chain crosses the membrane as a helical span at residues 422–442 (FVAFNNVVSNGGYVYFGTLII). Topologically, residues 443–473 (VMNYCRERSFRRLFAVQPTLAERYGLPQHSG) are cytoplasmic. The helical transmembrane segment at 474-494 (LMTAIGLAVIMEGISSATYHV) threads the bilayer. The Extracellular portion of the chain corresponds to 495–498 (CPNN). The helical transmembrane segment at 499-517 (INYQFDTALMYVIGMLGKL) threads the bilayer. Topologically, residues 518–530 (KIWSLRHPDMVVS) are cytoplasmic. The helical transmembrane segment at 531–551 (AYHAFGFLGVFLMAAIAGVYV) threads the bilayer. At 552–554 (HNM) the chain is on the extracellular side. The helical transmembrane segment at 555–575 (IFWALFSIIYIASMLLVSLEF) threads the bilayer. The Cholesterol-binding sequence motif signature appears at 570–578 (LVSLEFYFK). Over 576–612 (YFKGIWTLNLRELRNSIRLSWVSSRHLSCVVPAYKAR) the chain is Cytoplasmic. Residues 613–633 (FFVILLLNIANTAVVVYGLEA) form a helical membrane-spanning segment. The Extracellular portion of the chain corresponds to 634-637 (HPKD). A helical transmembrane segment spans residues 638–658 (FLSFLLIPFIGNLFIYIIYYI). Over 659–671 (LMKMIYREKIPKR) the chain is Cytoplasmic. A helical membrane pass occupies residues 672 to 692 (AIALLFAAVISWTCAGILFNQ). At 693–728 (RVSDWSKMPAISRELNKPCIFLNFYDNHDLWHLSSA) the chain is on the extracellular side. A helical transmembrane segment spans residues 729–749 (FAIFFSFTAINVIDDDLMFVM). Over 750–756 (RNTIRVF) the chain is Cytoplasmic.

The protein belongs to the SID1 family. As to expression, highly expressed along the intestine with expression also detected in the pharynx, especially at the terminal bulb, and in the excretory gland cells.

Its subcellular location is the cell membrane. It catalyses the reaction cholesterol(in) = cholesterol(out). In terms of biological role, cholesterol-binding protein which is involved in dietary cholesterol uptake from the environment. Does not play a role in double-stranded RNA transport in contrast to other SID1 family members. The sequence is that of Cholesterol uptake protein 1 from Caenorhabditis elegans.